The following is a 498-amino-acid chain: ATP synthase subunit beta, chloroplastic (498 aa).

172–179 (GGAGVGKT) lines the ATP pocket.

This sequence belongs to the ATPase alpha/beta chains family. In terms of assembly, F-type ATPases have 2 components, CF(1) - the catalytic core - and CF(0) - the membrane proton channel. CF(1) has five subunits: alpha(3), beta(3), gamma(1), delta(1), epsilon(1). CF(0) has four main subunits: a(1), b(1), b'(1) and c(9-12).

The protein resides in the plastid. It is found in the chloroplast thylakoid membrane. It catalyses the reaction ATP + H2O + 4 H(+)(in) = ADP + phosphate + 5 H(+)(out). Its function is as follows. Produces ATP from ADP in the presence of a proton gradient across the membrane. The catalytic sites are hosted primarily by the beta subunits. This is ATP synthase subunit beta, chloroplastic from Solanum tuberosum (Potato).